Reading from the N-terminus, the 335-residue chain is Fructose-1,6-bisphosphatase class 1 (335 aa).

Mg(2+) contacts are provided by glutamate 89, aspartate 112, leucine 114, and aspartate 115. Substrate-binding positions include 115 to 118, asparagine 208, tyrosine 241, and lysine 271; that span reads DGSS. Glutamate 277 contacts Mg(2+).

It belongs to the FBPase class 1 family. As to quaternary structure, homotetramer. Requires Mg(2+) as cofactor.

It localises to the cytoplasm. The catalysed reaction is beta-D-fructose 1,6-bisphosphate + H2O = beta-D-fructose 6-phosphate + phosphate. The protein operates within carbohydrate biosynthesis; gluconeogenesis. In Proteus mirabilis (strain HI4320), this protein is Fructose-1,6-bisphosphatase class 1.